Reading from the N-terminus, the 339-residue chain is Fructose-1,6-bisphosphatase, cytosolic (339 aa).

Positions 71, 100, 121, 123, and 124 each coordinate Mg(2+). Residues 124 to 127, Asn215, Tyr247, Tyr267, and Lys277 each bind substrate; that span reads DGSS. Glu283 contributes to the Mg(2+) binding site.

It belongs to the FBPase class 1 family. Mg(2+) serves as cofactor.

The protein resides in the cytoplasm. The enzyme catalyses beta-D-fructose 1,6-bisphosphate + H2O = beta-D-fructose 6-phosphate + phosphate. The polypeptide is Fructose-1,6-bisphosphatase, cytosolic (Oryza sativa subsp. indica (Rice)).